We begin with the raw amino-acid sequence, 361 residues long: Chorismate synthase (361 aa).

Residues R48 and R54 each contribute to the NADP(+) site. FMN-binding positions include 125–127, 238–239, G278, 293–297, and R319; these read RSS, NA, and KPTSS.

Belongs to the chorismate synthase family. In terms of assembly, homotetramer. Requires FMNH2 as cofactor.

The enzyme catalyses 5-O-(1-carboxyvinyl)-3-phosphoshikimate = chorismate + phosphate. Its pathway is metabolic intermediate biosynthesis; chorismate biosynthesis; chorismate from D-erythrose 4-phosphate and phosphoenolpyruvate: step 7/7. Functionally, catalyzes the anti-1,4-elimination of the C-3 phosphate and the C-6 proR hydrogen from 5-enolpyruvylshikimate-3-phosphate (EPSP) to yield chorismate, which is the branch point compound that serves as the starting substrate for the three terminal pathways of aromatic amino acid biosynthesis. This reaction introduces a second double bond into the aromatic ring system. The sequence is that of Chorismate synthase from Vibrio vulnificus (strain YJ016).